Reading from the N-terminus, the 379-residue chain is MAKKTKKAEEITKKFGDERRKALDDALKNIEKDFGKGAVMRLGERAEQKVQVMSSGSLALDIALGAGGYPKGRIVEIYGPESSGKTTVALHAVAQAQKEGGIAAFIDAEHALDPAYAAALGVNIDELLLSQPDSGEQDLEIAGKLIDSGAVDLVVVDSVAALVPRAEIDGDIGDSHVGLQARMMMQAMHKLTASINKTKTIAIFINQLREKVGVMFGNPETTPGGRALKFYSSVRLDVRGNTQIKGTGEHKDHNVGKETKIKVVKNKVAPPFREAFVEIMYGEGISRTGELIKIASDLDIIQKAGAWYSYNGEKIGQGSENAKKYLADNPAIFDEIDHKVRVHFGMTEDDSPVQSELVEEKNEADDLVLDLDNAIEIEE.

79-86 lines the ATP pocket; the sequence is GPESSGKT.

It belongs to the RecA family.

The protein localises to the cytoplasm. Can catalyze the hydrolysis of ATP in the presence of single-stranded DNA, the ATP-dependent uptake of single-stranded DNA by duplex DNA, and the ATP-dependent hybridization of homologous single-stranded DNAs. It interacts with LexA causing its activation and leading to its autocatalytic cleavage. This Streptococcus agalactiae protein is Protein RecA.